Here is a 304-residue protein sequence, read N- to C-terminus: E3 ubiquitin-protein ligase RNF115 (304 aa).

A2 is subject to N-acetylalanine. The segment at 95–138 is disordered; the sequence is PLDQDNRANERGHQTHTDFWGARPPRLPLGRRYRSRGSSRPDRS. Basic and acidic residues predominate over residues 98-110; it reads QDNRANERGHQTH. 2 positions are modified to phosphoserine; by PKB/AKT1: S132 and S133. An RING-type zinc finger spans residues 228-269; sequence CPVCKEDYTVEEEVRQLPCNHFFHSSCIVPWLELHDTCPVCR. The interval 272 to 304 is disordered; the sequence is LNGEDSTRQSQSTEASASNRFSNDSQLHDRWTF. The span at 279–296 shows a compositional bias: polar residues; sequence RQSQSTEASASNRFSNDS.

In terms of assembly, interacts with RAB7A. Interacts with EGFR and FLT3. Interacts with BST2. Interacts with STX17. Interacts with YWHAE. In terms of processing, phosphorylated by AKT1, allowing association with the 14-3-3 chaperones that facilitates associating with TLRs. RING-type zinc finger-dependent and E2-dependent autoubiquitination. Post-translationally, deubiquitinated by USP9X; antogonizing its autoubiquitination and subsequent proteasomal degradation. As to expression, expressed at extremely low levels in normal breast, prostate, lung, colon. Higher levels of expression are detected in heart, skeletal muscle, testis as well as in breast and prostate cancer cells.

It is found in the cytoplasm. Its subcellular location is the nucleus. It localises to the endoplasmic reticulum. The protein resides in the golgi apparatus. The enzyme catalyses S-ubiquitinyl-[E2 ubiquitin-conjugating enzyme]-L-cysteine + [acceptor protein]-L-lysine = [E2 ubiquitin-conjugating enzyme]-L-cysteine + N(6)-ubiquitinyl-[acceptor protein]-L-lysine.. It functions in the pathway protein modification; protein ubiquitination. Functionally, E3 ubiquitin-protein ligase that catalyzes the 'Lys-48'- and/or 'Lys-63'-linked polyubiquitination of various substrates and thereby plays a role in a number of signaling pathways including autophagy, innate immunity, cell proliferation and cell death. Plays a role in the endosomal trafficking and degradation of membrane receptors including EGFR, FLT3, MET and CXCR4 through their polyubiquitination. Participates together with BST2 in antiviral immunity by facilitating the internalization of HIV-1 virions into intracellular vesicles leading to their lysosomal degradation. Also possesses an antiviral activity independently of BST2 by promoting retroviral GAG proteins ubiquitination, redistribution to endo-lysosomal compartments and, ultimately, lysosomal degradation. Catalyzes distinct types of ubiquitination on MAVS and STING1 at different phases of viral infection to promote innate antiviral response. Mediates the 'Lys-48'-linked ubiquitination of MAVS leading to its proteasomal degradation and ubiquitinates STING1 via 'Lys-63'-linked polyubiquitination, critical for its oligomerization and the subsequent recruitment of TBK1. Plays a positive role in the autophagosome-lysosome fusion by interacting with STX17 and enhancing its stability without affecting 'Lys-48'- or 'Lys-63'-linked polyubiquitination levels, which in turn promotes autophagosome maturation. Negatively regulates TLR-induced expression of proinflammatory cytokines by catalyzing 'Lys-11'-linked ubiquitination of RAB1A and RAB13 to inhibit post-ER trafficking of TLRs to the Golgi by RAB1A and subsequently from the Golgi apparatus to the cell surface by RAB13. This chain is E3 ubiquitin-protein ligase RNF115, found in Homo sapiens (Human).